A 1399-amino-acid polypeptide reads, in one-letter code: DNA-directed RNA polymerase subunit beta' (1399 aa).

Zn(2+) contacts are provided by C70, C72, C85, and C88. D460, D462, and D464 together coordinate Mg(2+). Zn(2+)-binding residues include C814, C888, C895, and C898.

Belongs to the RNA polymerase beta' chain family. The RNAP catalytic core consists of 2 alpha, 1 beta, 1 beta' and 1 omega subunit. When a sigma factor is associated with the core the holoenzyme is formed, which can initiate transcription. Mg(2+) serves as cofactor. Requires Zn(2+) as cofactor.

It carries out the reaction RNA(n) + a ribonucleoside 5'-triphosphate = RNA(n+1) + diphosphate. In terms of biological role, DNA-dependent RNA polymerase catalyzes the transcription of DNA into RNA using the four ribonucleoside triphosphates as substrates. In Pseudomonas putida (strain GB-1), this protein is DNA-directed RNA polymerase subunit beta'.